We begin with the raw amino-acid sequence, 257 residues long: Uroporphyrinogen-III C-methyltransferase (257 aa).

Residues proline 11, glycine 87 to aspartate 89, threonine 117 to serine 118, and methionine 170 each bind S-adenosyl-L-homocysteine.

The protein belongs to the precorrin methyltransferase family.

It carries out the reaction uroporphyrinogen III + 2 S-adenosyl-L-methionine = precorrin-2 + 2 S-adenosyl-L-homocysteine + H(+). Its pathway is cofactor biosynthesis; adenosylcobalamin biosynthesis; precorrin-2 from uroporphyrinogen III: step 1/1. The protein operates within porphyrin-containing compound metabolism; siroheme biosynthesis; precorrin-2 from uroporphyrinogen III: step 1/1. Its function is as follows. Catalyzes the two successive C-2 and C-7 methylation reactions involved in the conversion of uroporphyrinogen III to precorrin-2 via the intermediate formation of precorrin-1. It is a step in the biosynthesis of both cobalamin (vitamin B12) and siroheme. This is Uroporphyrinogen-III C-methyltransferase (sumT) from Bacillus subtilis (strain 168).